The following is a 71-amino-acid chain: Large ribosomal subunit protein bL31 (71 aa).

4 residues coordinate Zn(2+): Cys-16, Cys-18, Cys-37, and Cys-40.

The protein belongs to the bacterial ribosomal protein bL31 family. Type A subfamily. As to quaternary structure, part of the 50S ribosomal subunit. Zn(2+) serves as cofactor.

Binds the 23S rRNA. In Nitratidesulfovibrio vulgaris (strain DSM 19637 / Miyazaki F) (Desulfovibrio vulgaris), this protein is Large ribosomal subunit protein bL31.